Reading from the N-terminus, the 197-residue chain is Peptidyl-tRNA hydrolase (197 aa).

A tRNA-binding site is contributed by Y18. The active-site Proton acceptor is H23. The tRNA site is built by F69, N71, and N117.

Belongs to the PTH family. As to quaternary structure, monomer.

The protein localises to the cytoplasm. The enzyme catalyses an N-acyl-L-alpha-aminoacyl-tRNA + H2O = an N-acyl-L-amino acid + a tRNA + H(+). In terms of biological role, hydrolyzes ribosome-free peptidyl-tRNAs (with 1 or more amino acids incorporated), which drop off the ribosome during protein synthesis, or as a result of ribosome stalling. Functionally, catalyzes the release of premature peptidyl moieties from peptidyl-tRNA molecules trapped in stalled 50S ribosomal subunits, and thus maintains levels of free tRNAs and 50S ribosomes. In Psychromonas ingrahamii (strain DSM 17664 / CCUG 51855 / 37), this protein is Peptidyl-tRNA hydrolase.